The primary structure comprises 852 residues: Potassium voltage-gated channel subfamily KQT member 2 (852 aa).

Topologically, residues 1–90 (MVQKSRNGGV…LYNVLERPRG (90 aa)) are cytoplasmic. The residue at position 52 (serine 52) is a Phosphoserine; by PKA. The helical transmembrane segment at 91–113 (WAFIYHAYVFLLVFSCLVLSVFS) threads the bilayer. Residues 114–123 (TIKEYEKSSE) lie on the Extracellular side of the membrane. The helical transmembrane segment at 124 to 145 (GALYILEIVTIVVFGVEYFVRI) threads the bilayer. Residues 146-163 (WAAGCCCRYRGWRGRLKF) lie on the Cytoplasmic side of the membrane. A helical transmembrane segment spans residues 164–183 (ARKPFCVIDIMVLIASIAVL). At 184–196 (AAGSQGNVFATSA) the chain is on the extracellular side. Residues 197 to 215 (LRSLRFLQILRMIRMDRRG) traverse the membrane as a helical; Voltage-sensor segment. Arginine 214 lines the a 1,2-diacyl-sn-glycero-3-phospho-(1D-myo-inositol-4,5-bisphosphate) pocket. Topologically, residues 216–227 (GTWKLLGSVVYA) are cytoplasmic. The tract at residues 222 to 323 (GSVVYAHSKE…SGFALKVQEQ (102 aa)) is mediates interaction with SLC5A3. Residues 228–253 (HSKELVTAWYIGFLCLILASFLVYLA) traverse the membrane as a helical segment. An a 1,2-diacyl-sn-glycero-3-phospho-(1D-myo-inositol-4,5-bisphosphate)-binding site is contributed by lysine 230. Residues 254 to 263 (EKGENDHFDT) are Extracellular-facing. The pore-forming intramembrane region spans 264–276 (YADALWWGLITLT). Residues 277–282 (TIGYGD) carry the Selectivity filter motif. Over 277–287 (TIGYGDKYPQT) the chain is Extracellular. A helical membrane pass occupies residues 288-314 (WNGRLLAATFTLIGVSFFALPAGILGS). At 315-852 (GFALKVQEQH…GDVAWAGPRK (538 aa)) the chain is on the cytoplasmic side. The mediates interaction with calmodulin stretch occupies residues 317-522 (ALKVQEQHRQ…EDLTPGLKVS (206 aa)). An a 1,2-diacyl-sn-glycero-3-phospho-(1D-myo-inositol-4,5-bisphosphate)-binding site is contributed by lysine 327. Positions 404-469 (TFRKEPQPEP…SKVPKSWSFG (66 aa)) are disordered. A compositionally biased stretch (polar residues) spans 440 to 457 (PQAQTVRRSPSADQSLDD). Phosphoserine is present on residues serine 448, serine 450, serine 454, serine 458, serine 460, and serine 489. 3 disordered regions span residues 579–601 (GPTI…EDPS), 643–662 (GAKE…SRDH), and 672–718 (IVRS…DHGS). Over residues 583–592 (TDKDRTKGPA) the composition is skewed to basic and acidic residues. Serine 655 is subject to Phosphoserine. Serine 781 and serine 783 each carry phosphoserine. Residues 818 to 852 (ESDTDSDLCTPCGPPPRSATGEGPFGDVAWAGPRK) form a disordered region.

Belongs to the potassium channel family. KQT (TC 1.A.1.15) subfamily. Kv7.2/KCNQ2 sub-subfamily. As to quaternary structure, heterotetramer with KCNQ3; forms heterotetrameric M-channel responsible for the M-current. Homotetrameric; forms a functional homotetrameric channel resulting in the expression of a small M-current. Interacts with calmodulin; the interaction is calcium-independent, constitutive and participates in the proper assembly of a functional M-channel. May associate with KCNE2. Interacts with IQCJ-SCHIP1. Interacts (via the pore module) with SLC5A3/SMIT1; forms a coregulatory complex that alters ion selectivity, voltage dependence and gating kinetics of the channel. Interacts with AKAP5; the interaction may help KCNQ2 channel complex to retain calcium-bound calmodulin. In terms of processing, KCNQ2/KCNQ3 heteromeric current can be increased by intracellular cyclic AMP, an effect that depends on phosphorylation of Ser-52 in the N-terminal region. KCNQ2/KCNQ3 are ubiquitinated by NEDD4L. Ubiquitination leads to protein degradation. Degradation induced by NEDD4L is inhibited by USP36. Expressed in brain and sympathetic ganglia. In brain, expressed in cortex, hippocampus, and cerebellum. In sympathetic ganglia, expressed at lower levels in celiac ganglia and superior mesenteric ganglia than in superior cervical ganglia.

The protein resides in the cell membrane. It catalyses the reaction K(+)(in) = K(+)(out). It carries out the reaction Rb(+)(in) = Rb(+)(out). The catalysed reaction is Cs(+)(in) = Cs(+)(out). The enzyme catalyses Na(+)(in) = Na(+)(out). Its activity is regulated as follows. Phosphatidylinositol-4,5-bisphosphate (PIP2) potentiates the activation of KCNQ channels by enhancing the electro-mechanical coupling of the voltage-sensing domain (VSD) and the pore-forming domain (PD). In the closed state of the channel, PIP2 is anchored at the S2-S3 loop; upon channel activation, PIP2 interacts with the S4-S5 linker and is involved in channel gating. Calcium suppresses KCNQ2 and KCNQ2-KCNQ3 channel currents, with calcium-bound calmodulin inducing a change in channel configuration which leads to the reduction of channel affinity for PIP2 and subsequent current suppression. In terms of biological role, pore-forming subunit of the voltage-gated potassium (Kv) M-channel which is responsible for the M-current, a key controller of neuronal excitability. M-channel is composed of pore-forming subunits KCNQ2 and KCNQ3 assembled as heterotetramers. The native M-current has a slowly activating and deactivating potassium conductance which plays a critical role in determining the subthreshold electrical excitability of neurons as well as the responsiveness to synaptic inputs. M-channel is selectively permeable in vitro to other cations besides potassium, in decreasing order of affinity K(+) &gt; Rb(+) &gt; Cs(+) &gt; Na(+). M-channel association with SLC5A3/SMIT1 alters channel ion selectivity, increasing Na(+) and Cs(+) permeation relative to K(+). Suppressed by activation of the muscarinic acetylcholine receptor CHRM1. The sequence is that of Potassium voltage-gated channel subfamily KQT member 2 from Rattus norvegicus (Rat).